Consider the following 639-residue polypeptide: tRNA uridine 5-carboxymethylaminomethyl modification enzyme MnmG (639 aa).

FAD is bound at residue 13-18 (GGGHAG). 274–288 (GPRYCPSIEDKIHRF) lines the NAD(+) pocket.

It belongs to the MnmG family. Homodimer. Heterotetramer of two MnmE and two MnmG subunits. It depends on FAD as a cofactor.

It is found in the cytoplasm. Functionally, NAD-binding protein involved in the addition of a carboxymethylaminomethyl (cmnm) group at the wobble position (U34) of certain tRNAs, forming tRNA-cmnm(5)s(2)U34. The protein is tRNA uridine 5-carboxymethylaminomethyl modification enzyme MnmG of Polynucleobacter asymbioticus (strain DSM 18221 / CIP 109841 / QLW-P1DMWA-1) (Polynucleobacter necessarius subsp. asymbioticus).